The following is a 264-amino-acid chain: MIYRIISHIPKIFFKPAYDLYERYLIEKVKSGVLPKHVAIIMDGNRRWARKHEKPPWYGHLFGSKKLEEILEWCHELGIRILTVYAFSTENFKRSKEEVDRLMKLFEEKFRELVTDKRVHEYGVRVNVIGRKELLPKSVRDAVEEAERATRKYNNYILNVALAYGGRSEIVDAVKDIARDVISGKLRIEEIDEELLRRYLYVPNMPDPDIVIRTGGEVRISNFLLYQIAYSELFFVDVYFPEFRKIDFLRIIREFQKRERRFGR.

The active site involves aspartate 43. Residue aspartate 43 coordinates Mg(2+). Residues 44-47 (GNRR), tryptophan 48, histidine 60, and 88-90 (STE) each bind substrate. The active-site Proton acceptor is the asparagine 91. Substrate contacts are provided by residues phenylalanine 92, arginine 94, arginine 213, and 219–221 (RIS). Glutamate 232 is a Mg(2+) binding site.

Belongs to the UPP synthase family. As to quaternary structure, homodimer. The cofactor is Mg(2+).

It catalyses the reaction geranylgeranyl diphosphate + 7 isopentenyl diphosphate = tri-trans,hepta-cis-undecaprenyl diphosphate + 7 diphosphate. Functionally, catalyzes the sequential condensation of isopentenyl diphosphate (IPP) with geranylgeranyl diphosphate (GGPP) to yield (2Z,6Z,10Z,14Z,18Z,22Z,26Z,30E,34E,38E)-undecaprenyl diphosphate (tritrans,heptacis-UPP). It is probably the precursor of glycosyl carrier lipids. In Pyrococcus horikoshii (strain ATCC 700860 / DSM 12428 / JCM 9974 / NBRC 100139 / OT-3), this protein is Tritrans,polycis-undecaprenyl-diphosphate synthase (geranylgeranyl-diphosphate specific).